The primary structure comprises 453 residues: Gastrin/cholecystokinin type B receptor (453 aa).

The Extracellular segment spans residues 1-57 (MDLLKLNRSLQGPGPGSGSSLCRPGVSLLNSSSAGNLSCETPRIRGTGTRELELTIR). N-linked (GlcNAc...) asparagine glycans are attached at residues Asn-7, Asn-30, and Asn-36. Residues 58–79 (ITLYAVIFLMSVGGNVLIIVVL) form a helical membrane-spanning segment. Residues 80–87 (GLSRRLRT) are Cytoplasmic-facing. A helical transmembrane segment spans residues 88–109 (VTNAFLLSLAVSDLLLAVACMP). Residues 110–131 (FTLLPNLMGTFIFGTVICKAVS) lie on the Extracellular side of the membrane. Cys-127 and Cys-205 are oxidised to a cystine. The helical transmembrane segment at 132 to 150 (YLMGVSVSVSTLNLAAIAL) threads the bilayer. The Cytoplasmic portion of the chain corresponds to 151–170 (ERYSAICRPLQARVWQTRSH). A helical transmembrane segment spans residues 171–189 (AARVILATWLLSGLLMVPY). Residues 190 to 219 (PVYTVVQPVGPRILQCMHLWPSERVQQMWS) are Extracellular-facing. The chain crosses the membrane as a helical span at residues 220-242 (VLLLILLFFIPGVVMAVAYGLIS). The Cytoplasmic segment spans residues 243–339 (RELYLGLRFD…KLLAKKRVVR (97 aa)). Residues 257 to 276 (SETQSRVRNQGGLPGGAAAP) form a disordered region. A helical membrane pass occupies residues 340 to 361 (MLLVIVLLFFVCWLPVYSANTW). The Extracellular portion of the chain corresponds to 362–379 (RAFDGPGARRALAGAPIS). The helical transmembrane segment at 380-400 (FIHLLSYTSACANPLVYCFMH) threads the bilayer. At 401–453 (RRFRQACLDTCARCCPRPPRARPRPLPDEDPPTPSIASLSRLSYTTISTLGPG) the chain is on the cytoplasmic side. Cys-414 carries the S-palmitoyl cysteine lipid modification.

The protein belongs to the G-protein coupled receptor 1 family.

Its subcellular location is the cell membrane. Functionally, receptor for gastrin and cholecystokinin. The CCK-B receptors occur throughout the central nervous system where they modulate anxiety, analgesia, arousal, and neuroleptic activity. This receptor mediates its action by association with G proteins that activate a phosphatidylinositol-calcium second messenger system. This chain is Gastrin/cholecystokinin type B receptor (Cckbr), found in Mus musculus (Mouse).